Consider the following 188-residue polypeptide: Photosystem I assembly protein Ycf4 (188 aa).

2 helical membrane-spanning segments follow: residues 26–46 (YFWA…GLSS) and 68–88 (LVMG…WFVI).

This sequence belongs to the Ycf4 family.

It is found in the cellular thylakoid membrane. Seems to be required for the assembly of the photosystem I complex. The sequence is that of Photosystem I assembly protein Ycf4 from Synechococcus elongatus (strain ATCC 33912 / PCC 7942 / FACHB-805) (Anacystis nidulans R2).